The following is a 233-amino-acid chain: uncharacterized protein (233 aa).

This sequence belongs to the RHS family.

This is an uncharacterized protein from Escherichia coli (strain K12).